Consider the following 622-residue polypeptide: Probable potassium transport system protein Kup (622 aa).

The next 12 membrane-spanning stretches (helical) occupy residues 8–28 (LAAL…TSVL), 50–70 (VLSI…VVLV), 103–123 (LGIG…TPAI), 137–157 (PHFG…LFAV), 169–189 (FGPV…PHIV), 215–235 (FIIL…YADL), 247–267 (WFSV…ALLL), 285–305 (ALIP…QALI), 337–357 (IYIP…VVMF), 366–386 (AYGI…FFVI), 393–413 (PLAL…AFFG), and 419–439 (LLQG…LMMT).

This sequence belongs to the HAK/KUP transporter (TC 2.A.72) family.

The protein localises to the cell inner membrane. The enzyme catalyses K(+)(in) + H(+)(in) = K(+)(out) + H(+)(out). In terms of biological role, transport of potassium into the cell. Likely operates as a K(+):H(+) symporter. The chain is Probable potassium transport system protein Kup from Paracidovorax citrulli (strain AAC00-1) (Acidovorax citrulli).